A 1397-amino-acid polypeptide reads, in one-letter code: DNA-directed RNA polymerase subunit beta (1397 aa).

The protein belongs to the RNA polymerase beta chain family. The RNAP catalytic core consists of 2 alpha, 1 beta, 1 beta' and 1 omega subunit. When a sigma factor is associated with the core the holoenzyme is formed, which can initiate transcription.

The catalysed reaction is RNA(n) + a ribonucleoside 5'-triphosphate = RNA(n+1) + diphosphate. Functionally, DNA-dependent RNA polymerase catalyzes the transcription of DNA into RNA using the four ribonucleoside triphosphates as substrates. In Rhodospirillum centenum (strain ATCC 51521 / SW), this protein is DNA-directed RNA polymerase subunit beta.